The chain runs to 319 residues: Ribosomal large subunit pseudouridine synthase C (319 aa).

Residues 20–83 (QRIDNFLRTQ…AEREEEAVSP (64 aa)) enclose the S4 RNA-binding domain. Residue Asp144 is part of the active site.

The protein belongs to the pseudouridine synthase RluA family.

It catalyses the reaction uridine(955/2504/2580) in 23S rRNA = pseudouridine(955/2504/2580) in 23S rRNA. In terms of biological role, responsible for synthesis of pseudouridine from uracil at positions 955, 2504 and 2580 in 23S ribosomal RNA. This chain is Ribosomal large subunit pseudouridine synthase C (rluC), found in Salmonella typhi.